The following is a 76-amino-acid chain: Large ribosomal subunit protein eL20 (76 aa).

Belongs to the eukaryotic ribosomal protein eL20 family. Part of the 50S ribosomal subunit. Binds 23S rRNA.

This Methanococcus maripaludis (strain C6 / ATCC BAA-1332) protein is Large ribosomal subunit protein eL20.